Here is a 485-residue protein sequence, read N- to C-terminus: Cobyric acid synthase (485 aa).

In terms of domain architecture, GATase cobBQ-type spans 252-439 (KVRIAVPILP…VHGLFGDDRQ (188 aa)). Catalysis depends on cysteine 334, which acts as the Nucleophile. Histidine 431 is a catalytic residue.

Belongs to the CobB/CobQ family. CobQ subfamily.

The protein operates within cofactor biosynthesis; adenosylcobalamin biosynthesis. Functionally, catalyzes amidations at positions B, D, E, and G on adenosylcobyrinic A,C-diamide. NH(2) groups are provided by glutamine, and one molecule of ATP is hydrogenolyzed for each amidation. In Azorhizobium caulinodans (strain ATCC 43989 / DSM 5975 / JCM 20966 / LMG 6465 / NBRC 14845 / NCIMB 13405 / ORS 571), this protein is Cobyric acid synthase.